The primary structure comprises 308 residues: Type II restriction enzyme MamI (308 aa).

It carries out the reaction Endonucleolytic cleavage of DNA to give specific double-stranded fragments with terminal 5'-phosphates.. A P subtype restriction enzyme that recognizes the double-stranded sequence 5'-GATNNNNATC-3' and cleaves after N-5. The chain is Type II restriction enzyme MamI from Microbacterium ammoniaphilum.